Reading from the N-terminus, the 328-residue chain is Malate dehydrogenase (328 aa).

12-18 is a binding site for NAD(+); the sequence is GAAGQIG. Substrate-binding residues include arginine 93 and arginine 99. Residues asparagine 106, glutamine 113, and 130–132 each bind NAD(+); that span reads VGN. Residues asparagine 132 and arginine 166 each contribute to the substrate site. Catalysis depends on histidine 191, which acts as the Proton acceptor.

This sequence belongs to the LDH/MDH superfamily. MDH type 2 family.

The enzyme catalyses (S)-malate + NAD(+) = oxaloacetate + NADH + H(+). In terms of biological role, catalyzes the reversible oxidation of malate to oxaloacetate. In Dechloromonas aromatica (strain RCB), this protein is Malate dehydrogenase.